Reading from the N-terminus, the 102-residue chain is Transcription factor UPBEAT1 (102 aa).

The bHLH domain maps to 32–82 (IRPRKSVEASRRPCRAIHRRVKTLKELVPNTKTSEGLDGLFRQTADYILAL).

In terms of assembly, homodimer. Expressed in the root vascular tissue and in root hairs and lateral root caps. Detected at the protein level in all cell files in the elongation zone.

The protein resides in the nucleus. Its function is as follows. Transcription factor that modulates the balance between cellular proliferation and differentiation in root growth. Does not act through cytokinin and auxin signaling, but by repressing peroxidase expression in the elongation zone. The chain is Transcription factor UPBEAT1 (UPB1) from Arabidopsis thaliana (Mouse-ear cress).